The primary structure comprises 142 residues: Large ribosomal subunit protein uL13 (142 aa).

Belongs to the universal ribosomal protein uL13 family. In terms of assembly, part of the 50S ribosomal subunit.

This protein is one of the early assembly proteins of the 50S ribosomal subunit, although it is not seen to bind rRNA by itself. It is important during the early stages of 50S assembly. This Hydrogenovibrio crunogenus (strain DSM 25203 / XCL-2) (Thiomicrospira crunogena) protein is Large ribosomal subunit protein uL13.